The chain runs to 504 residues: MVGRGKGKGREHVLLVVFPAQGHISPALQLAFKIVAHSSIDLTFLTSSSAVASILIGLPPTAPALNFAAFSQGNLHNDDDDDDDAKDYMHTLCKHGSQSVRDIIHSTKKGQGQGQGQGQGQGQGQGHPITRILYTTLLPWAADVAREFRLPSVLLWTQPVTTFLTFHYYFTGYEDAINKVRNQQGTEDDSTIQLPRLPLLSSRDLHSFMLPSNPFKGAINTFKEHLEALDAEETPPTILVNSYDALEEEALQAMIPKYKTMGIGPLIPSSVFDTRETTCEVVSLVPDLAQKSKDDCQWHGWLNSKAEGSVIYVSFGSHVKQSKAQTEEIAKGLLASGHPFLWVITSNEEEEGDEIMEQNLVEEIQEKGMMIVPWCAQFQVLKHPSVGCFMTHCGWNSTLESIACGVPMIGFPKMFDQPTISKLIAHVWKVGVRVNAAVDGIVGQEVIKNCIESVMDPDGIGRELNENVRKFMSLGKKAAEEGGSSHNNFKAFLQDMTGGTTTIN.

The active-site Proton acceptor is His-23. An an anthocyanidin-binding site is contributed by His-23. The tract at residues 107-126 (TKKGQGQGQGQGQGQGQGQG) is disordered. Over residues 111–125 (QGQGQGQGQGQGQGQ) the composition is skewed to gly residues. UDP-alpha-D-glucose-binding residues include Thr-157, Gln-377, His-392, Trp-395, Asn-396, Ser-397, Glu-400, Asp-416, and Gln-417.

The protein belongs to the UDP-glycosyltransferase family. In terms of tissue distribution, predominantly expressed in petals and weakly in filaments. Not expressed in leaves, stems and other floral organs.

The enzyme catalyses an anthocyanidin 3-O-beta-D-glucoside + UDP-alpha-D-glucose = an anthocyanidin 3,5-di-O-beta-D-glucoside + UDP + 2 H(+). It functions in the pathway pigment biosynthesis; anthocyanin biosynthesis. Catalyzes the glucosylation at the O-5 position of anthocyanidin 3-glucosides to form anthocyanidin 3,5-di-O-glucosides using UDP-glucose as sugar donor. Anthocyanidin 3,5-di-O-glucosides are molecules that are responsible for pigmentation. Involved in biosynsthesis of accumulate gentiodelphin, a unique polyacylated delphinidin-type anthocyanin, in the petals. Also acts on anthocyanidin 3-O-(6-O-malonylglucoside). Much less active with hydroxycinnamoylglucose derivatives. No activity in the absence of the 3-O-glucoside group. This is Anthocyanidin 3-O-glucoside 5-O-glucosyltransferase (5GT7) from Gentiana triflora (Clustered gentian).